A 329-amino-acid polypeptide reads, in one-letter code: Nicotianamine synthase 8 (329 aa).

This sequence belongs to the nicotianamine synthase (NAS)-like family. In terms of assembly, homotrimer.

The catalysed reaction is 3 S-adenosyl-L-methionine = nicotianamine + 3 S-methyl-5'-thioadenosine + 3 H(+). Functionally, synthesizes nicotianamine, a polyamine that is the first intermediate in the synthesis of the phytosiderophores of the mugineic acid type found in gramineae which serve as a sensor for the physiological iron status within the plant, and/or might be involved in the transport of iron. This Hordeum vulgare (Barley) protein is Nicotianamine synthase 8 (NAS8).